The primary structure comprises 351 residues: DNA beta-glucosyltransferase (351 aa).

As to quaternary structure, monomer.

It catalyses the reaction Transfers a beta-D-glucosyl residue from UDP-alpha-D-glucose to a hydroxymethylcytosine residue in DNA.. It participates in genetic information processing; DNA modification. Functionally, catalyzes the transfer of glucose from uridine diphosphoglucose to 5-hydroxymethyl cytosine of T4 DNA to yield glucosyl 5-hydroxymethyl cytosine (glc-HMC). This DNA process seems to occur immediately after DNA synthesis since the DNA alpha-glucosyltransferase interacts with the clamp protein gp45. The glc-HMC modification protects the phage genome against its own nucleases and the host restriction endonuclease system. The glc-HMC modification also protects against the host CRISPR-Cas9 defense system. In Enterobacteria phage T4 (Bacteriophage T4), this protein is DNA beta-glucosyltransferase (bgt).